Here is a 66-residue protein sequence, read N- to C-terminus: Protein translocase subunit SecE (66 aa).

Residues 29-49 traverse the membrane as a helical segment; the sequence is LVASTLVVVVAVFIFSPICLV.

This sequence belongs to the SecE/SEC61-gamma family. Component of the Sec protein translocase complex. Heterotrimer consisting of SecY, SecE and SecG subunits. The heterotrimers can form oligomers, although 1 heterotrimer is thought to be able to translocate proteins. Interacts with the ribosome. Interacts with SecDF, and other proteins may be involved. Interacts with SecA.

Its subcellular location is the cell inner membrane. Functionally, essential subunit of the Sec protein translocation channel SecYEG. Clamps together the 2 halves of SecY. May contact the channel plug during translocation. In Rickettsia montanensis, this protein is Protein translocase subunit SecE.